A 270-amino-acid chain; its full sequence is Ribosomal RNA small subunit methyltransferase A (270 aa).

Residues asparagine 16, leucine 18, glycine 43, glutamate 64, aspartate 89, and asparagine 110 each coordinate S-adenosyl-L-methionine.

Belongs to the class I-like SAM-binding methyltransferase superfamily. rRNA adenine N(6)-methyltransferase family. RsmA subfamily.

Its subcellular location is the cytoplasm. It carries out the reaction adenosine(1518)/adenosine(1519) in 16S rRNA + 4 S-adenosyl-L-methionine = N(6)-dimethyladenosine(1518)/N(6)-dimethyladenosine(1519) in 16S rRNA + 4 S-adenosyl-L-homocysteine + 4 H(+). Functionally, specifically dimethylates two adjacent adenosines (A1518 and A1519) in the loop of a conserved hairpin near the 3'-end of 16S rRNA in the 30S particle. May play a critical role in biogenesis of 30S subunits. The sequence is that of Ribosomal RNA small subunit methyltransferase A from Pseudomonas fluorescens (strain ATCC BAA-477 / NRRL B-23932 / Pf-5).